A 588-amino-acid polypeptide reads, in one-letter code: UvrABC system protein C (588 aa).

Residues 12-89 (SKPGCYLYLN…IKKYRPKYNV (78 aa)) enclose the GIY-YIG domain. The region spanning 194 to 229 (NEVKTLLTNQMHKAAENLQFEEAQRIKEQIISLDFT) is the UVR domain.

It belongs to the UvrC family. In terms of assembly, interacts with UvrB in an incision complex.

It localises to the cytoplasm. Its function is as follows. The UvrABC repair system catalyzes the recognition and processing of DNA lesions. UvrC both incises the 5' and 3' sides of the lesion. The N-terminal half is responsible for the 3' incision and the C-terminal half is responsible for the 5' incision. This chain is UvrABC system protein C, found in Mesoplasma florum (strain ATCC 33453 / NBRC 100688 / NCTC 11704 / L1) (Acholeplasma florum).